The sequence spans 168 residues: Type-2 ice-structuring protein (168 aa).

An N-terminal signal peptide occupies residues 1-17; sequence MLTVSLLVCAMMALTQA. A propeptide spanning residues 18 to 34 is cleaved from the precursor; sequence DHDGVLKGTATEAGEVS. Disulfide bonds link Cys-45-Cys-56, Cys-73-Cys-163, Cys-107-Cys-138, Cys-127-Cys-149, and Cys-139-Cys-155. The C-type lectin domain occupies 52 to 164; it reads HGQRCFYSEA…CPASHASICA (113 aa).

The protein localises to the secreted. Its function is as follows. Has antifreeze activity to protect fish blood from freezing at subzero sea water temperatures. Binds to ice crystals and inhibits their growth. The thermal hysteresis (TH) activity, the ability to lower the blood freezing point, is approximately 0.45 degrees Celsius at 0.15 mM for this protein. This chain is Type-2 ice-structuring protein, found in Brachyopsis segaliensis (Sea poacher).